The sequence spans 62 residues: MLCLPVFIILLLLVSPAATMPVDLEILKAPTKESRKDFEMRIELLRSKRQCCRPANMSCCQG.

The first 19 residues, 1 to 19 (MLCLPVFIILLLLVSPAAT), serve as a signal peptide directing secretion. A propeptide spanning residues 20–47 (MPVDLEILKAPTKESRKDFEMRIELLRS) is cleaved from the precursor. Residue glutamine 50 is modified to Pyrrolidone carboxylic acid. At glutamine 61 the chain carries Glutamine amide.

This sequence belongs to the conotoxin T superfamily. Contains 2 disulfide bonds that can be either 'C1-C3, C2-C4' or 'C1-C4, C2-C3', since these disulfide connectivities have been observed for conotoxins with cysteine framework V (for examples, see AC P0DQQ7 and AC P81755). Expressed by the venom duct.

It localises to the secreted. This is Conotoxin Lt5.8 from Conus litteratus (Lettered cone).